Reading from the N-terminus, the 394-residue chain is Mitogen-activated protein kinase 2 (394 aa).

Gly residues predominate over residues 1–31 (MRMEGGGGGGHGHHGGGGGGHGHHGGIGGGE). The interval 1-33 (MRMEGGGGGGHGHHGGGGGGHGHHGGIGGGEAQ) is disordered. The 287-residue stretch at 61–347 (VPPIRPVGRG…VDEALCHPYL (287 aa)) folds into the Protein kinase domain. ATP contacts are provided by residues 67-75 (VGRGACGII) and Lys-90. Asp-187 acts as the Proton acceptor in catalysis. Phosphotyrosine is present on Tyr-221.

This sequence belongs to the protein kinase superfamily. CMGC Ser/Thr protein kinase family. MAP kinase subfamily. In terms of processing, the phosphorylation on Tyr-221 activates the enzyme. A conserved Thr, which must also be phosphorylated to activate the enzyme in closely related sequences, is replaced by Met-219 in this sequence.

The catalysed reaction is L-seryl-[protein] + ATP = O-phospho-L-seryl-[protein] + ADP + H(+). It catalyses the reaction L-threonyl-[protein] + ATP = O-phospho-L-threonyl-[protein] + ADP + H(+). The chain is Mitogen-activated protein kinase 2 (MPK2) from Oryza sativa subsp. japonica (Rice).